A 616-amino-acid polypeptide reads, in one-letter code: Chaperone protein HscA (616 aa).

It belongs to the heat shock protein 70 family.

Chaperone involved in the maturation of iron-sulfur cluster-containing proteins. Has a low intrinsic ATPase activity which is markedly stimulated by HscB. Involved in the maturation of IscU. This is Chaperone protein HscA from Cronobacter sakazakii (strain ATCC BAA-894) (Enterobacter sakazakii).